The sequence spans 105 residues: uncharacterized protein (105 aa).

N-acetylserine is present on serine 2.

This is an uncharacterized protein from Saccharomyces cerevisiae (strain ATCC 204508 / S288c) (Baker's yeast).